The sequence spans 859 residues: Leucine--tRNA ligase (859 aa).

Residues 42–52 carry the 'HIGH' region motif; it reads PYPSGRLHMGH. Positions 618 to 622 match the 'KMSKS' region motif; sequence KMSKS. Lysine 621 contacts ATP.

Belongs to the class-I aminoacyl-tRNA synthetase family.

It localises to the cytoplasm. The enzyme catalyses tRNA(Leu) + L-leucine + ATP = L-leucyl-tRNA(Leu) + AMP + diphosphate. The protein is Leucine--tRNA ligase of Shewanella sp. (strain ANA-3).